A 411-amino-acid chain; its full sequence is Isocitrate dehydrogenase [NADP] peroxisomal (411 aa).

NADP(+)-binding positions include 78–80 (TIT) and Arg85. Residue Thr80 participates in substrate binding. Substrate is bound by residues 97-103 (SPNGTLR), Arg112, and Arg135. Mn(2+) is bound at residue Asp254. Lys262 lines the NADP(+) pocket. Position 277 (Asp277) interacts with Mn(2+). NADP(+)-binding positions include 312–317 (GTVTRH) and Asn330.

The protein belongs to the isocitrate and isopropylmalate dehydrogenases family. It depends on Mg(2+) as a cofactor. Mn(2+) is required as a cofactor.

It is found in the peroxisome. The enzyme catalyses D-threo-isocitrate + NADP(+) = 2-oxoglutarate + CO2 + NADPH. Functionally, may play a role in N-alkane metabolism, glutamate synthesis, and/or NADPH generation in the peroxisomes. This is Isocitrate dehydrogenase [NADP] peroxisomal (IDP2) from Candida tropicalis (Yeast).